Here is a 342-residue protein sequence, read N- to C-terminus: Phosphoribosylformylglycinamidine cyclo-ligase (342 aa).

The protein belongs to the AIR synthase family.

The protein localises to the cytoplasm. It catalyses the reaction 2-formamido-N(1)-(5-O-phospho-beta-D-ribosyl)acetamidine + ATP = 5-amino-1-(5-phospho-beta-D-ribosyl)imidazole + ADP + phosphate + H(+). It functions in the pathway purine metabolism; IMP biosynthesis via de novo pathway; 5-amino-1-(5-phospho-D-ribosyl)imidazole from N(2)-formyl-N(1)-(5-phospho-D-ribosyl)glycinamide: step 2/2. This chain is Phosphoribosylformylglycinamidine cyclo-ligase, found in Latilactobacillus sakei subsp. sakei (strain 23K) (Lactobacillus sakei subsp. sakei).